The following is a 219-amino-acid chain: Large ribosomal subunit protein uL3 (219 aa).

The disordered stretch occupies residues 113–142; that stretch reads TTKGHGYQGNIHKDNQSRGPMAHGSRYHRR.

Belongs to the universal ribosomal protein uL3 family. In terms of assembly, part of the 50S ribosomal subunit. Forms a cluster with proteins L14 and L19.

Functionally, one of the primary rRNA binding proteins, it binds directly near the 3'-end of the 23S rRNA, where it nucleates assembly of the 50S subunit. This Limosilactobacillus reuteri (strain DSM 20016) (Lactobacillus reuteri) protein is Large ribosomal subunit protein uL3.